The primary structure comprises 494 residues: Tyrosinase (494 aa).

Cu cation is bound by residues His38, His53, Cys64, His224, His228, and His256.

It belongs to the tyrosinase family. Cu(2+) is required as a cofactor.

It carries out the reaction 2 L-dopa + O2 = 2 L-dopaquinone + 2 H2O. The catalysed reaction is L-tyrosine + O2 = L-dopaquinone + H2O. The sequence is that of Tyrosinase (mepA) from Rhizobium meliloti (Ensifer meliloti).